A 439-amino-acid polypeptide reads, in one-letter code: MNIGFISLGCSKNRVDTEVMMAALKKAGHRIVNSLERADLVVVNTCGFITPAKEESIEAIIETAELKKKGSLQFLIAAGCLSQRYGRELLLEIPELDGVFGISSVSSIAGVVNRIAQGERVCFTEATPTEYFEKGHRILTTPPGSAYLKISEGCNNSCSYCVIPSIRGKLRSRQINELLNEAAQLLKMGIKELVLVAQDTSAYGHDISPQSALPTLLRELSKLDGLEWIRLMYLHPLYLSDDIIDVVAYENKVLPYLDIPIQHASSKILKLMHRRHDNSHLRTMISKLRARIPNLTLRTTVMLGFPGEEEKDFAELYEFVAESQFDWLGAFSFVPEEGSKAALLPNQIEDEIKAERKDKILRLQQKITRQKNLARINTQEKVLISSQLSKNLFVGRTYFQAPEVDGLTLVKTDFKLTKGDFVDVQLVGVRNYDMIGEYQ.

An MTTase N-terminal domain is found at M1–Q117. Positions 10, 46, 80, 154, 158, and 161 each coordinate [4Fe-4S] cluster. Positions T140–Q370 constitute a Radical SAM core domain. The TRAM domain maps to L373–Q439.

The protein belongs to the methylthiotransferase family. RimO subfamily. The cofactor is [4Fe-4S] cluster.

It localises to the cytoplasm. The enzyme catalyses L-aspartate(89)-[ribosomal protein uS12]-hydrogen + (sulfur carrier)-SH + AH2 + 2 S-adenosyl-L-methionine = 3-methylsulfanyl-L-aspartate(89)-[ribosomal protein uS12]-hydrogen + (sulfur carrier)-H + 5'-deoxyadenosine + L-methionine + A + S-adenosyl-L-homocysteine + 2 H(+). Its function is as follows. Catalyzes the methylthiolation of an aspartic acid residue of ribosomal protein uS12. This is Ribosomal protein uS12 methylthiotransferase RimO from Syntrophomonas wolfei subsp. wolfei (strain DSM 2245B / Goettingen).